The chain runs to 290 residues: Nucleotide-binding protein Aave_3603 (290 aa).

13-20 (GMSGSGKS) provides a ligand contact to ATP. 62 to 65 (DVRS) contacts GTP.

This sequence belongs to the RapZ-like family.

Displays ATPase and GTPase activities. The chain is Nucleotide-binding protein Aave_3603 from Paracidovorax citrulli (strain AAC00-1) (Acidovorax citrulli).